The primary structure comprises 101 residues: Glutenin, high molecular weight subunit PC256 (101 aa).

The segment covering 1–27 (EKLGQGQQPRQWLQPRQGQQGYYPTSP) has biased composition (polar residues). The disordered stretch occupies residues 1-65 (EKLGQGQQPR…QGYDSPYHVS (65 aa)). Residues 41 to 62 (QGYYPTSPQQSGQGQQGYDSPY) are compositionally biased toward low complexity.

This sequence belongs to the gliadin/glutenin family. As to quaternary structure, disulfide-bridge linked aggregates.

Glutenins are high-molecular weight seed storage proteins of wheat endosperm. Thought to be responsible for the visco-elastic property of wheat dough. The chain is Glutenin, high molecular weight subunit PC256 from Triticum aestivum (Wheat).